Reading from the N-terminus, the 1066-residue chain is Ubiquitin conjugation factor E4 A (1066 aa).

The interval 33 to 57 (KEQLKQQSDELPASPDDSDNSVSES) is disordered. Residue Lys386 is modified to N6-acetyllysine. The U-box domain occupies 987-1061 (DACDEFLDPI…QRWLAERKQQ (75 aa)).

The protein belongs to the ubiquitin conjugation factor E4 family.

The protein resides in the cytoplasm. The enzyme catalyses S-ubiquitinyl-[E2 ubiquitin-conjugating enzyme]-L-cysteine + [acceptor protein]-L-lysine = [E2 ubiquitin-conjugating enzyme]-L-cysteine + N(6)-ubiquitinyl-[acceptor protein]-L-lysine.. It participates in protein modification; protein ubiquitination. Functionally, ubiquitin-protein ligase that probably functions as an E3 ligase in conjunction with specific E1 and E2 ligases. May also function as an E4 ligase mediating the assembly of polyubiquitin chains on substrates ubiquitinated by another E3 ubiquitin ligase. Mediates 'Lys-48'-linked polyubiquitination of substrates. This Pongo abelii (Sumatran orangutan) protein is Ubiquitin conjugation factor E4 A.